We begin with the raw amino-acid sequence, 702 residues long: MAAPAAPAAGETGPDARLEAALADVPELARLLEIDPYLKPFAADFQRRYKKFSQVLHDIGENEGGIDKFSRGYESFGIHRCSDGGIYCKEWAPGAEGVFLTGEFSGWNPFSHPYKKLEYGKWELYIPPKQNKSPLIPHGSKLKVVITSKSGEILYRISPWAKYVVRENNNVNYDWIHWAPEDPYKFKHSRPKKPRSLRIYESHVGISSHEGKIASYKHFTSNVLPRIKDLGYNCIQLMAIMEHAYYASFGYQITSFFAASSRYGTPEELKELVDTAHSMGIVVLLDVVHSHASKNSEDGLNMFDGTDSCYFHSGPRGTHDLWDSRLFIYSSWEVLRFLLSNIRWWLEEYCFDGFRFDGVTSMLYHHHGMGQGFSGDYNEYFGLQVDEDALIYLMLANHLAHTLYPDSITIAEDVSGMPALCSPTSQGGGGFDYRLAMAIPDKWIQLLKEFKDEDWNMGNIVYTLTNRRYLEKCVAYAESHDQALVGDKTLAFWLMDAEMYTNMSVLAPFTPVIDRGIQLHKMIRLITHGLGGEGYLNFMGNEFGHPEWLDFPRKGNNESYHYARRQFNLTDDDLLRYKFLNNFDRDMNRLEERCGWLSAPQAYVSEKHEANKTITFERAGLLFIFNFHPSKSYTDYRVGTATPGKFKIVLDSDAAEYGGHQRLDHNTNYFAEAFEHNGRPYSLLVYIPSRVALILQNVDLQN.

N-acetylalanine is present on alanine 2. Substrate is bound by residues 62-63 (NE) and 91-93 (WAP). Tryptophan 107 contacts (1,4-alpha-D-glucosyl)n. 118–121 (EYGK) is a binding site for substrate. Residue lysine 143 coordinates (1,4-alpha-D-glucosyl)n. The residue at position 173 (tyrosine 173) is a Phosphotyrosine. Residue 333–336 (EVLR) coordinates substrate. The Nucleophile role is filled by aspartate 357. Glutamate 412 serves as the catalytic Proton donor.

The protein belongs to the glycosyl hydrolase 13 family. GlgB subfamily. In terms of assembly, monomer.

It catalyses the reaction Transfers a segment of a (1-&gt;4)-alpha-D-glucan chain to a primary hydroxy group in a similar glucan chain.. The protein operates within glycan biosynthesis; glycogen biosynthesis. Its function is as follows. Glycogen-branching enzyme participates in the glycogen biosynthetic process along with glycogenin and glycogen synthase. Generates alpha-1,6-glucosidic branches from alpha-1,4-linked glucose chains, to increase solubility of the glycogen polymer. The polypeptide is 1,4-alpha-glucan-branching enzyme (Gbe1) (Mus musculus (Mouse)).